The primary structure comprises 180 residues: Succinate dehydrogenase cytochrome B subunit, mitochondrial (180 aa).

The Mitochondrial matrix segment spans residues Met1–Thr82. Residues Gly83–Ala103 form a helical membrane-spanning segment. The Mitochondrial intermembrane segment spans residues Gly104–Trp122. The helical transmembrane segment at Ile123–Ile143 threads the bilayer. His138 is a heme binding site. The Mitochondrial matrix portion of the chain corresponds to Arg144–Val159. Residues Tyr160–Ile180 traverse the membrane as a helical segment.

Belongs to the cytochrome b560 family. In terms of assembly, forms part of complex II containing four subunits: a 70 kDa flavoprotein (FP), a 27 kDa iron-sulfur protein (IP), a cytochrome B and a membrane-anchoring protein. Requires heme as cofactor.

The protein localises to the mitochondrion inner membrane. It participates in carbohydrate metabolism; tricarboxylic acid cycle. In terms of biological role, membrane-anchoring subunit of succinate dehydrogenase (SDH) that is involved in complex II of the mitochondrial electron transport chain and is responsible for transferring electrons from succinate to ubiquinone (coenzyme Q). In Schizosaccharomyces pombe (strain 972 / ATCC 24843) (Fission yeast), this protein is Succinate dehydrogenase cytochrome B subunit, mitochondrial (sdh3).